The sequence spans 607 residues: uncharacterized protein (607 aa).

Positions cysteine 16–cysteine 44 form a DNA-binding region, zn(2)-C6 fungal-type.

Its subcellular location is the nucleus. This is an uncharacterized protein from Saccharomyces cerevisiae (strain ATCC 204508 / S288c) (Baker's yeast).